The sequence spans 299 residues: Dermonecrotic toxin LiSicTox-alphaIVA1 (299 aa).

Positions 1–18 are cleaved as a signal peptide; it reads MLFPTALIFGCWALVIEG. Residue histidine 30 is part of the active site. The Mg(2+) site is built by glutamate 50 and aspartate 52. Histidine 66 serves as the catalytic Nucleophile. 2 cysteine pairs are disulfide-bonded: cysteine 70–cysteine 76 and cysteine 72–cysteine 217. Residue aspartate 110 coordinates Mg(2+).

It belongs to the arthropod phospholipase D family. Class II subfamily. Class IIa sub-subfamily. It depends on Mg(2+) as a cofactor. Expressed by the venom gland.

It localises to the secreted. The catalysed reaction is an N-(acyl)-sphingosylphosphocholine = an N-(acyl)-sphingosyl-1,3-cyclic phosphate + choline. The enzyme catalyses an N-(acyl)-sphingosylphosphoethanolamine = an N-(acyl)-sphingosyl-1,3-cyclic phosphate + ethanolamine. It catalyses the reaction a 1-acyl-sn-glycero-3-phosphocholine = a 1-acyl-sn-glycero-2,3-cyclic phosphate + choline. It carries out the reaction a 1-acyl-sn-glycero-3-phosphoethanolamine = a 1-acyl-sn-glycero-2,3-cyclic phosphate + ethanolamine. Functionally, dermonecrotic toxins cleave the phosphodiester linkage between the phosphate and headgroup of certain phospholipids (sphingolipid and lysolipid substrates), forming an alcohol (often choline) and a cyclic phosphate. This toxin acts on sphingomyelin (SM) with high activity. It may also act on ceramide phosphoethanolamine (CPE), lysophosphatidylcholine (LPC) and lysophosphatidylethanolamine (LPE), but not on lysophosphatidylserine (LPS), and lysophosphatidylglycerol (LPG). It acts by transphosphatidylation, releasing exclusively cyclic phosphate products as second products. Has hemolytic activity in human erythrocytes in a dose-dependent manner. In vivo, this toxin induces dermonecrosis, edema, hemorrhage, massive inflammatory response, as well as vascular permeability. In addition, thrombus formation has also been detected in dermal blood vessels. It also induces platelet aggregation. It is noteworthy that a Glu-248 replaces the Asp present in paralogs, without decrease in catalytic and hemolytic activities. The polypeptide is Dermonecrotic toxin LiSicTox-alphaIVA1 (Loxosceles intermedia (Brown spider)).